The following is a 49-amino-acid chain: MARYRCCRSHSRSRCRRRRRRSRRRRRRSCGRRRRAGYRRYTVRYRRRR.

The tract at residues 1 to 49 is disordered; sequence MARYRCCRSHSRSRCRRRRRRSRRRRRRSCGRRRRAGYRRYTVRYRRRR.

Belongs to the protamine P1 family. In terms of tissue distribution, testis.

The protein resides in the nucleus. It is found in the chromosome. Functionally, protamines substitute for histones in the chromatin of sperm during the haploid phase of spermatogenesis. They compact sperm DNA into a highly condensed, stable and inactive complex. The chain is Sperm protamine P1 (PRM1) from Macronycteris commersonii (Commerson's roundleaf bat).